Here is a 464-residue protein sequence, read N- to C-terminus: MTVKTRFAPSPTGYLHIGGVRTALFSWAFARHHKGEFLLRIEDTDLARSTAESVNIILDGMKWVGLNYDNADNVVYQTRRFDRYKEVIAELLEKGHAYYCYCSKEELEAMREKAEKEGTATYDRRWRPEAGKTLPEIPAGVQPVVRFKTPLDGVTRWADLVKGEISIPNEALDDLIIARSDGSPTYNFCVVVDDYDMGVTHVIRGDDHVNNTPKQINILKAIGATLPEYGHLPMILNEQGKKISKRSGDTVAITDFGAMGILPEAMLNYLARLGWAHGDDEFFTMEQFIEWFDLKDVSPSPSRMDLKKLYWINGEHIKITPNGKLAELVKPRLALRDIHETEKPALEDVLALVKDRAQDLNTLADECLYFYVKQTPTEADVQKHWDDEAAARMLRFAERLEGLEDWNAEAIHDLFKPFCDEEGIKMGKLGMPLRLAVCGTAKTPSVDAVLALIGKEEVLKRIRA.

Positions 9–19 match the 'HIGH' region motif; that stretch reads PSPTGYLHIGG. The short motif at 242-246 is the 'KMSKS' region element; that stretch reads KISKR. Lys-245 is a binding site for ATP.

It belongs to the class-I aminoacyl-tRNA synthetase family. Glutamate--tRNA ligase type 1 subfamily. In terms of assembly, monomer.

It localises to the cytoplasm. It catalyses the reaction tRNA(Glu) + L-glutamate + ATP = L-glutamyl-tRNA(Glu) + AMP + diphosphate. Its function is as follows. Catalyzes the attachment of glutamate to tRNA(Glu) in a two-step reaction: glutamate is first activated by ATP to form Glu-AMP and then transferred to the acceptor end of tRNA(Glu). In Neisseria meningitidis serogroup A / serotype 4A (strain DSM 15465 / Z2491), this protein is Glutamate--tRNA ligase.